Consider the following 191-residue polypeptide: Small ribosomal subunit protein eS7 (191 aa).

Methionine 1 is subject to N-acetylmethionine.

This sequence belongs to the eukaryotic ribosomal protein eS7 family.

The sequence is that of Small ribosomal subunit protein eS7 (RPS7) from Brassica oleracea (Wild cabbage).